The following is a 209-amino-acid chain: Large ribosomal subunit protein uL4 (209 aa).

A disordered region spans residues 46-72 (GTSSTKTRSEVRGSSKKPWKQKGTGRA). A compositionally biased stretch (basic residues) spans 59-72 (SSKKPWKQKGTGRA).

Belongs to the universal ribosomal protein uL4 family. As to quaternary structure, part of the 50S ribosomal subunit.

In terms of biological role, one of the primary rRNA binding proteins, this protein initially binds near the 5'-end of the 23S rRNA. It is important during the early stages of 50S assembly. It makes multiple contacts with different domains of the 23S rRNA in the assembled 50S subunit and ribosome. Its function is as follows. Forms part of the polypeptide exit tunnel. The sequence is that of Large ribosomal subunit protein uL4 from Borreliella burgdorferi (strain ATCC 35210 / DSM 4680 / CIP 102532 / B31) (Borrelia burgdorferi).